A 573-amino-acid polypeptide reads, in one-letter code: MLFSDFCKILDKIEKTTKRLEKTDYFVELIDFIKTSEKPENLKQVSQITIGRVFAEFENKEIGIGPNLLLEAVKTTGIPEKDLKSKIKETGDIGTAVENLSSNIKQVSLFSQALTLEEVYSTLKKLSEIEGNSSQKKKTRIISNLLILADPVESRYISRLILEDMRIGMNIPTILASFSNYFNVNKESVEKIYAVTNDIGLLGEKLISGSDIENDPELKLKVFRPIKPMLAQLTPSIEDAMIETKMPQFETKYDGARVQVHKSNGDVKIYSRRLENITNSVPELVEEIKKLDIDNIILEGECVAMDLDSGKPRPFQDILRRFRRKYNIDKMAEKIALRIYFFDVLYYNRGLIDTPLKTRREILEKLFGTNNWDSELEKIKKEIFSSKMLFSSFKLNSGDPNLVKEFFNWSLSIGHEGIMIKNPDAPYTPGSRVKTMYKVKPTLENLDVVVTRAKIGMGKRKDWYGSYELSVKDNDGNLHVIGNVGSGLTEDDLEKLTKIVNEIKIEDLGEEVILEPKIVLEVTYEEIQTSEKYEMGYALRFPRVVQIREDKSINDINTLDDVKKIYEIERNRK.

Position 250 (Glu-250) interacts with ATP. Catalysis depends on Lys-252, which acts as the N6-AMP-lysine intermediate. The ATP site is built by Arg-257, Arg-272, Glu-301, Phe-342, Arg-432, and Lys-438.

It belongs to the ATP-dependent DNA ligase family. It depends on Mg(2+) as a cofactor.

It catalyses the reaction ATP + (deoxyribonucleotide)n-3'-hydroxyl + 5'-phospho-(deoxyribonucleotide)m = (deoxyribonucleotide)n+m + AMP + diphosphate.. Functionally, DNA ligase that seals nicks in double-stranded DNA during DNA replication, DNA recombination and DNA repair. This is DNA ligase from Methanococcus maripaludis (strain DSM 14266 / JCM 13030 / NBRC 101832 / S2 / LL).